Reading from the N-terminus, the 276-residue chain is Cytoplasmic envelopment protein 1 (276 aa).

The protein belongs to the herpesviridae cytoplasmic envelopment protein 1 family.

The protein localises to the virion. It localises to the virion tegument. It is found in the host cytoplasm. Its subcellular location is the host Golgi apparatus. Plays a critical role in cytoplasmic virus egress. Participates in the final step of tegumentation and envelope acquisition within the host cytoplasm. The chain is Cytoplasmic envelopment protein 1 (42) from Equus caballus (Horse).